Consider the following 107-residue polypeptide: Cytochrome c-550 (107 aa).

The heme c site is built by C11, C14, H15, and M80.

Binds 1 heme c group covalently per subunit.

The chain is Cytochrome c-550 from Ancylobacter novellus (Thiobacillus novellus).